The chain runs to 124 residues: UPF0344 protein BH2983 (124 aa).

The next 4 helical transmembrane spans lie at G15–K35, K40–M60, L61–I81, and I102–I122.

This sequence belongs to the UPF0344 family.

It is found in the cell membrane. The sequence is that of UPF0344 protein BH2983 from Halalkalibacterium halodurans (strain ATCC BAA-125 / DSM 18197 / FERM 7344 / JCM 9153 / C-125) (Bacillus halodurans).